The sequence spans 274 residues: Large ribosomal subunit protein uL2cz/uL2cy (274 aa).

Residues 224-274 (NPVDHPHGGGEGRAPIGRKKPATPWGYPALGRRSRKRNKYSDNLILRRRSK) are disordered.

It belongs to the universal ribosomal protein uL2 family. As to quaternary structure, part of the 50S ribosomal subunit.

The protein resides in the plastid. It localises to the chloroplast. This Carica papaya (Papaya) protein is Large ribosomal subunit protein uL2cz/uL2cy (rpl2-A).